Here is a 261-residue protein sequence, read N- to C-terminus: Type III pantothenate kinase (261 aa).

Residue 7 to 14 coordinates ATP; that stretch reads EQGNTNTM. 108 to 111 serves as a coordination point for substrate; that stretch reads GADR. The active-site Proton acceptor is D110. D130 is a binding site for K(+). ATP is bound at residue T133. Residue T187 coordinates substrate.

It belongs to the type III pantothenate kinase family. In terms of assembly, homodimer. The cofactor is NH4(+). K(+) serves as cofactor.

The protein localises to the cytoplasm. It catalyses the reaction (R)-pantothenate + ATP = (R)-4'-phosphopantothenate + ADP + H(+). The protein operates within cofactor biosynthesis; coenzyme A biosynthesis; CoA from (R)-pantothenate: step 1/5. Catalyzes the phosphorylation of pantothenate (Pan), the first step in CoA biosynthesis. This is Type III pantothenate kinase from Caulobacter vibrioides (strain ATCC 19089 / CIP 103742 / CB 15) (Caulobacter crescentus).